A 400-amino-acid chain; its full sequence is Multidrug resistance protein MdtH (400 aa).

A run of 10 helical transmembrane segments spans residues 13–33 (YFLLLDNMLVVLGFFVVFPLI), 34–54 (SIRFVEQLGWAGVIVGFALGL), 99–116 (PWILWLSCILSALGGTLF), 139–159 (LLLMQDSAGAVIGALIGSWLL), 165–185 (LVCWVGAGIFVLAAIFNAWLL), 214–234 (VLTLTGYFVLSVQVMLMFPIV), 244–264 (AVKWMYAIEALLSLTLLYPIA), 289–309 (FPVGITHSLHAIFLIITLFYL), 340–360 (LGLAFGGAIGYTGGGWMYDIG), and 365–385 (LPELPWFLLGSIGFITLYALH).

This sequence belongs to the major facilitator superfamily. DHA1 family. MdtH (TC 2.A.1.2.21) subfamily.

The protein localises to the cell inner membrane. This chain is Multidrug resistance protein MdtH, found in Proteus mirabilis (strain HI4320).